The primary structure comprises 394 residues: Elongation factor Tu (394 aa).

The tr-type G domain maps to 10 to 204; it reads KPHVNVGTIG…AMDDYIPAPE (195 aa). The tract at residues 19–26 is G1; it reads GHVDHGKT. 19–26 is a GTP binding site; it reads GHVDHGKT. A Mg(2+)-binding site is contributed by T26. Residues 60–64 form a G2 region; sequence GITIN. The tract at residues 81 to 84 is G3; it reads DCPG. GTP-binding positions include 81–85 and 136–139; these read DCPGH and NKCD. A G4 region spans residues 136–139; it reads NKCD. The tract at residues 174–176 is G5; sequence SAL.

Belongs to the TRAFAC class translation factor GTPase superfamily. Classic translation factor GTPase family. EF-Tu/EF-1A subfamily. As to quaternary structure, monomer.

The protein resides in the cytoplasm. It carries out the reaction GTP + H2O = GDP + phosphate + H(+). Its function is as follows. GTP hydrolase that promotes the GTP-dependent binding of aminoacyl-tRNA to the A-site of ribosomes during protein biosynthesis. The polypeptide is Elongation factor Tu (Francisella tularensis subsp. holarctica (strain FTNF002-00 / FTA)).